Consider the following 145-residue polypeptide: Hemoglobin fetal subunit beta (145 aa).

Residues 1 to 145 (MLTAEEKASV…VANALAHRYH (145 aa)) form the Globin domain. 2 residues coordinate heme b: H62 and H91.

Belongs to the globin family. As to quaternary structure, heterotetramer of two alpha chains and two beta chains.

This is Hemoglobin fetal subunit beta from Ovis aries (Sheep).